The chain runs to 261 residues: tRNA U34 carboxymethyltransferase (261 aa).

Residues Lys25, Trp39, Lys44, Gly63, 114 to 115, Tyr135, and Arg250 each bind carboxy-S-adenosyl-L-methionine; that span reads VE.

Belongs to the class I-like SAM-binding methyltransferase superfamily. CmoB family. As to quaternary structure, homotetramer.

It catalyses the reaction carboxy-S-adenosyl-L-methionine + 5-hydroxyuridine(34) in tRNA = 5-carboxymethoxyuridine(34) in tRNA + S-adenosyl-L-homocysteine + H(+). Catalyzes carboxymethyl transfer from carboxy-S-adenosyl-L-methionine (Cx-SAM) to 5-hydroxyuridine (ho5U) to form 5-carboxymethoxyuridine (cmo5U) at position 34 in tRNAs. In Helicobacter pylori (strain G27), this protein is tRNA U34 carboxymethyltransferase.